Here is a 147-residue protein sequence, read N- to C-terminus: Ribosome-binding factor A (147 aa).

A disordered region spans residues 126–147 (LKKNAQPAGDAHPYKDDDAMND). Positions 137–147 (HPYKDDDAMND) are enriched in basic and acidic residues.

It belongs to the RbfA family. As to quaternary structure, monomer. Binds 30S ribosomal subunits, but not 50S ribosomal subunits or 70S ribosomes.

It is found in the cytoplasm. In terms of biological role, one of several proteins that assist in the late maturation steps of the functional core of the 30S ribosomal subunit. Associates with free 30S ribosomal subunits (but not with 30S subunits that are part of 70S ribosomes or polysomes). Required for efficient processing of 16S rRNA. May interact with the 5'-terminal helix region of 16S rRNA. The protein is Ribosome-binding factor A of Corynebacterium diphtheriae (strain ATCC 700971 / NCTC 13129 / Biotype gravis).